A 200-amino-acid chain; its full sequence is TATA-box-binding protein 1 (200 aa).

Residue threonine 2 is modified to N-acetylthreonine. 2 repeat units span residues 25-101 (LQNI…ARIV) and 115-192 (IQNI…YPVL).

Belongs to the TBP family. Belongs to the TFIID complex together with the TBP-associated factors (TAFs). Binds DNA as monomer. Interacts with TAF1 (via N-terminus). Interacts with MEE12/CCG1. Associates with PWP2 in the nucleus. Component of a nuclear protein complex containing at least TATA binding proteins (TBPs, e.g. TBP1 and TBP2) and ATX1.

It localises to the nucleus. Its function is as follows. General transcription factor that functions at the core of the DNA-binding multiprotein factor TFIID. Binding of TFIID to the TATA box is the initial transcriptional step of the pre-initiation complex (PIC), playing a role in the activation of eukaryotic genes transcribed by RNA polymerase II. The protein is TATA-box-binding protein 1 of Arabidopsis thaliana (Mouse-ear cress).